A 1284-amino-acid chain; its full sequence is Collagen alpha-1(XX) chain (1284 aa).

Residues 1–22 form the signal peptide; the sequence is MSSGDPAHLGLCLWLWLGATLG. One can recognise a Fibronectin type-III 1 domain in the interval 28-119; sequence ASGLLRLAVL…EFVIEDLKSS (92 aa). Residues 122–171 form a disordered region; sequence DRSSQRPLGSGAPEPTPSHTGSPDPEQASEPQVAFTPSQDPRTPAGPQFR. In terms of domain architecture, VWFA spans 179-354; it reads DMVFLVDGSW…GALAGLLSRL (176 aa). 5 consecutive Fibronectin type-III domains span residues 379–468, 469–559, 560–647, 649–738, and 743–833; these read APTS…APLP, PPRA…TLAP, PRHL…TKKA, SPSQ…TPST, and PPSN…ACPA. A glycan (N-linked (GlcNAc...) asparagine) is linked at N607. Positions 842-1037 constitute a Laminin G-like domain; the sequence is GFDLMVAFSL…LQMLQIVCSD (196 aa). Disordered regions lie at residues 1065 to 1190 and 1212 to 1284; these read SCSS…EKGE and SFHE…GLWE. The segment covering 1071 to 1082 has biased composition (pro residues); that stretch reads PGPPGPQGPPGL. Collagen-like domains lie at 1071-1127 and 1133-1190; these read PGPP…IPGR and PKGM…EKGE. Composition is skewed to low complexity over residues 1112-1125 and 1166-1181; these read LPGL…QGIP and ERGP…LPGP. Residues 1271–1284 show a composition bias toward polar residues; sequence SPGQQGASTQGLWE.

As to expression, high expression in heart, lung, liver, skeletal muscle, kidney, pancreas, spleen, testis, ovary, subthalamic nucleus and fetal liver. Weak expression in other tissues tested.

The protein localises to the secreted. It localises to the extracellular space. Functionally, probable collagen protein. This is Collagen alpha-1(XX) chain (COL20A1) from Homo sapiens (Human).